A 122-amino-acid chain; its full sequence is Ribosome-binding factor A (122 aa).

The protein belongs to the RbfA family. Monomer. Binds 30S ribosomal subunits, but not 50S ribosomal subunits or 70S ribosomes.

It localises to the cytoplasm. Functionally, one of several proteins that assist in the late maturation steps of the functional core of the 30S ribosomal subunit. Associates with free 30S ribosomal subunits (but not with 30S subunits that are part of 70S ribosomes or polysomes). Required for efficient processing of 16S rRNA. May interact with the 5'-terminal helix region of 16S rRNA. In Albidiferax ferrireducens (strain ATCC BAA-621 / DSM 15236 / T118) (Rhodoferax ferrireducens), this protein is Ribosome-binding factor A.